A 405-amino-acid chain; its full sequence is L-rhamnonate dehydratase (405 aa).

2 residues coordinate substrate: H33 and R59. 3 residues coordinate Mg(2+): D226, E252, and E280. The Proton acceptor role is filled by H329. Position 349 (E349) interacts with substrate.

It belongs to the mandelate racemase/muconate lactonizing enzyme family. RhamD subfamily. Homooctamer; tetramer of dimers. Mg(2+) is required as a cofactor.

It catalyses the reaction L-rhamnonate = 2-dehydro-3-deoxy-L-rhamnonate + H2O. Catalyzes the dehydration of L-rhamnonate to 2-keto-3-deoxy-L-rhamnonate (KDR). This chain is L-rhamnonate dehydratase, found in Escherichia coli O6:H1 (strain CFT073 / ATCC 700928 / UPEC).